Reading from the N-terminus, the 471-residue chain is Variant surface glycoprotein ILTAT 1.1BC (471 aa).

The first 21 residues, 1–21, serve as a signal peptide directing secretion; it reads MVKAIASLMLLHIWAIEEIKA. N-linked (GlcNAc...) asparagine glycosylation occurs at asparagine 130. A compositionally biased stretch (polar residues) spans 158–168; sequence TVSKTTECNTE. Disordered stretches follow at residues 158–183 and 204–232; these read TVSK…TLSK and GGAC…TTAS. A compositionally biased stretch (basic and acidic residues) spans 214–226; sequence DKIHITNETDSKN. N-linked (GlcNAc...) asparagine glycans are attached at residues asparagine 220 and asparagine 260. 2 disulfide bridges follow: cysteine 397/cysteine 410 and cysteine 406/cysteine 421. Residues 432 to 454 form a disordered region; that stretch reads AEQAATNQETEGKDGKTTNTTGS. Asparagine 450 carries N-linked (GlcNAc...) asparagine glycosylation. A lipid anchor (GPI-anchor amidated serine) is attached at serine 454. Residues 455–471 constitute a propeptide, removed in mature form; it reads NSFLINKAPVLLAFLLL.

The protein resides in the cell membrane. VSG forms a coat on the surface of the parasite. The trypanosome evades the immune response of the host by expressing a series of antigenically distinct VSGs from an estimated 1000 VSG genes. The chain is Variant surface glycoprotein ILTAT 1.1BC from Trypanosoma brucei brucei.